A 554-amino-acid chain; its full sequence is Undecaprenyl phosphate-alpha-4-amino-4-deoxy-L-arabinose arabinosyl transferase (554 aa).

11 consecutive transmembrane segments (helical) span residues 4–24 (LKDSGAALLALFFVLVYLLPV), 87–107 (FGSIFSTALSAVLVYWLATLL), 115–135 (VLATLIYLSFLLVFGIGTYAV), 178–198 (FMTKGFLALAVPVIAVLPIVI), 206–226 (LVVFGPIAIVCAVLLSLPWAL), 262–282 (YLPILCIGVLPWLGLLPGALF), 293–313 (ELFFLLSWVVMPLLFFSVAKG), 315–335 (LPTYILPCMAPLSLLMAAYAT), 351–371 (VINLLFGVACALVIVVIGLGL), 384–404 (QKVWLGVLAFAGWGVTGFITL), and 414–434 (AAACPLLFILLVGYLIPQQVV).

This sequence belongs to the glycosyltransferase 83 family.

The protein resides in the cell inner membrane. It catalyses the reaction 4-amino-4-deoxy-alpha-L-arabinopyranosyl di-trans,octa-cis-undecaprenyl phosphate + lipid IVA = lipid IIA + di-trans,octa-cis-undecaprenyl phosphate.. It functions in the pathway lipopolysaccharide metabolism; 4-amino-4-deoxy-beta-L-arabinose-lipid A biosynthesis. In terms of biological role, catalyzes the transfer of the L-Ara4N moiety of the glycolipid undecaprenyl phosphate-alpha-L-Ara4N to lipid A. The modified arabinose is attached to lipid A and is required for resistance to polymyxin and cationic antimicrobial peptides. This chain is Undecaprenyl phosphate-alpha-4-amino-4-deoxy-L-arabinose arabinosyl transferase, found in Yersinia pseudotuberculosis serotype O:3 (strain YPIII).